A 1823-amino-acid chain; its full sequence is AF4/FMR2 family member lilli (1823 aa).

A compositionally biased stretch (low complexity) spans 1–41 (MAQQQQQQHQQQQHHQQQQQQLQQQQQLLQYNNNSYNLNYN). Disordered regions lie at residues 1 to 87 (MAQQ…DPEI), 126 to 305 (GFGS…ENHI), 422 to 544 (QQLT…KKKY), 570 to 626 (AGPG…WHLS), 686 to 712 (DSRH…YGVG), 753 to 1057 (PKNQ…DIPT), 1071 to 1287 (AAAQ…LKPR), 1322 to 1350 (ARQH…GART), 1413 to 1448 (FMLK…AEQL), 1480 to 1531 (ENSA…AIAS), 1547 to 1567 (TCSE…APRL), and 1715 to 1744 (GNTP…IVPQ). The segment covering 53-79 (REKYERQQGIQSDDRETSLFGEPRRLN) has biased composition (basic and acidic residues). Low complexity-rich tracts occupy residues 126-147 (GFGS…SSAS), 156-174 (QQQQ…QQQQ), and 205-249 (PSSS…TSSP). The segment covering 426-438 (PTPPKASPTPPVI) has biased composition (pro residues). T434 is subject to Phosphothreonine. Positions 441–454 (LKTEKNHSLEKQDS) are enriched in basic and acidic residues. The span at 456–466 (LENDLELSESD) shows a compositional bias: acidic residues. A phosphoserine mark is found at S463 and S465. A compositionally biased stretch (low complexity) spans 475–531 (SAGNSSNSSESDSSESGSEASSKGDPQQQQQQQQQHLLHQQQQHQQQQLLLQQQQQQ). Over residues 582–598 (AAGGVGSGSGSTGGGSS) the composition is skewed to gly residues. Over residues 599-612 (SSGMGTMSSSNSSN) the composition is skewed to low complexity. Over residues 764 to 785 (SDSGSGSSGSGSSSSDSAGGSS) the composition is skewed to low complexity. Polar residues predominate over residues 818-827 (HKAQPNSVTL). Positions 839–849 (PRQKKPRKKKM) are enriched in basic residues. Phosphoserine is present on residues S859 and S860. 5 stretches are compositionally biased toward low complexity: residues 877-906 (AATA…AAPA), 917-947 (QAQQ…SSQA), 962-979 (GTAS…VAAG), 1002-1057 (AAMA…DIPT), and 1102-1161 (NSSN…QLLQ). Positions 908 to 920 (KKGRGRPRKQAQQ) form a DNA-binding region, a.T hook. A phosphoserine mark is found at S939 and S941. Residues 1172–1181 (TLKQSAQQRL) show a composition bias toward polar residues. 2 stretches are compositionally biased toward low complexity: residues 1182 to 1203 (SSSD…ASSS) and 1253 to 1280 (QQQQ…QQQQ). Over residues 1334-1344 (TQQNGHLSSRS) the composition is skewed to polar residues. The segment covering 1480–1496 (ENSANASPNKLQQQNAR) has biased composition (polar residues). S1486 bears the Phosphoserine mark. Residues 1497-1531 (QLPLSQSQLQHQHQHQHQLQQQQSQSTATGHAIAS) show a composition bias toward low complexity. Residues 1555–1565 (TPPPAAPPPAP) are compositionally biased toward pro residues. The segment covering 1715–1735 (GNTPSSISPSNSVGSQGSGSN) has biased composition (low complexity).

This sequence belongs to the AF4 family.

The protein localises to the nucleus. Functionally, has a role in transcriptional regulation. Acts in parallel with the Ras/MAPK and the PI3K/PKB pathways in the control of cell identity and cellular growth. Essential for regulation of the cytoskeleton and cell growth but not for cell proliferation or growth rate. Required specifically for the microtubule-based basal transport of lipid droplets. Plays a partially redundant function downstream of Raf in cell fate specification in the developing eye. Pair-rule protein that regulates embryonic cellularization, gastrulation and segmentation. The chain is AF4/FMR2 family member lilli from Drosophila virilis (Fruit fly).